The chain runs to 261 residues: Syntaxin-7 (261 aa).

Serine 2 is modified (N-acetylserine). At 2 to 238 the chain is on the cytoplasmic side; that stretch reads SYTPGVGGDP…DYQRKSRKTL (237 aa). Threonine 4 carries the post-translational modification Phosphothreonine. At serine 45 the chain carries Phosphoserine. A coiled-coil region spans residues 47–69; it reads ELRQQLQQKQQYTNQLAKETDKY. The residue at position 75 (serine 75) is a Phosphoserine. Threonine 79 carries the phosphothreonine modification. 4 positions are modified to phosphoserine: serine 125, serine 126, serine 129, and serine 205. A disordered region spans residues 129 to 148; the sequence is SGSFPEDSSKERNLVSWESQ. The t-SNARE coiled-coil homology domain occupies 165–227; the sequence is LRLIHERESS…QQANQQLSRA (63 aa). A helical; Anchor for type IV membrane protein transmembrane segment spans residues 239-259; sequence CIIILILVIGVAIISLIIWGL. Over 260 to 261 the chain is Vesicular; the sequence is NH.

This sequence belongs to the syntaxin family. As to quaternary structure, forms a SNARE complex with VTI1B, STX8 and VAMP8 which functions in the homotypic fusion of late endosomes. Component of the SNARE complex composed of STX7, STX8, VAMP7 and VTI1B that is required for heterotypic fusion of late endosomes with lysosomes. Interacts with VPS11, VPS16 and VPS18. Interacts with VPS33A. Interacts with TPC1. As to expression, highest expression is found in placenta followed by heart, skeletal muscle, kidney and brain. Low expression is found in pancreas, lung and liver.

It localises to the early endosome membrane. In terms of biological role, may be involved in protein trafficking from the plasma membrane to the early endosome (EE) as well as in homotypic fusion of endocytic organelles. Mediates the endocytic trafficking from early endosomes to late endosomes and lysosomes. The polypeptide is Syntaxin-7 (STX7) (Homo sapiens (Human)).